Here is a 128-residue protein sequence, read N- to C-terminus: Large ribosomal subunit protein bL12 (128 aa).

This sequence belongs to the bacterial ribosomal protein bL12 family. In terms of assembly, homodimer. Part of the ribosomal stalk of the 50S ribosomal subunit. Forms a multimeric L10(L12)X complex, where L10 forms an elongated spine to which 2 to 4 L12 dimers bind in a sequential fashion. Binds GTP-bound translation factors.

Forms part of the ribosomal stalk which helps the ribosome interact with GTP-bound translation factors. Is thus essential for accurate translation. The chain is Large ribosomal subunit protein bL12 from Synechocystis sp. (strain ATCC 27184 / PCC 6803 / Kazusa).